A 245-amino-acid polypeptide reads, in one-letter code: Probable septum site-determining protein MinC (245 aa).

Over residues 112–132 the composition is skewed to basic and acidic residues; it reads ARERPLESAEPVAPKKPEKPP. The disordered stretch occupies residues 112–140; that stretch reads ARERPLESAEPVAPKKPEKPPEPTVKPTR.

Belongs to the MinC family. In terms of assembly, interacts with MinD and FtsZ.

In terms of biological role, cell division inhibitor that blocks the formation of polar Z ring septums. Rapidly oscillates between the poles of the cell to destabilize FtsZ filaments that have formed before they mature into polar Z rings. Prevents FtsZ polymerization. The sequence is that of Probable septum site-determining protein MinC from Pseudomonas fluorescens (strain Pf0-1).